The primary structure comprises 98 residues: Sec-independent protein translocase protein TatA (98 aa).

The helical transmembrane segment at 1 to 21 threads the bilayer; sequence MGAMSPWHWAIVALVVVILFG. Residues 43-98 are disordered; the sequence is VKEMQNDNSTPAPTAQSAPPPQSAPAELPVADTTTAPVTPPAPVQPQSQHTEPKSA. Over residues 66-79 the composition is skewed to low complexity; sequence APAELPVADTTTAP.

Belongs to the TatA/E family. The Tat system comprises two distinct complexes: a TatABC complex, containing multiple copies of TatA, TatB and TatC subunits, and a separate TatA complex, containing only TatA subunits. Substrates initially bind to the TatABC complex, which probably triggers association of the separate TatA complex to form the active translocon.

The protein localises to the cell membrane. In terms of biological role, part of the twin-arginine translocation (Tat) system that transports large folded proteins containing a characteristic twin-arginine motif in their signal peptide across membranes. TatA could form the protein-conducting channel of the Tat system. The sequence is that of Sec-independent protein translocase protein TatA from Rhodococcus erythropolis (Arthrobacter picolinophilus).